The primary structure comprises 758 residues: 5-methyltetrahydropteroyltriglutamate--homocysteine methyltransferase (758 aa).

Residues 16–19 and Lys112 contribute to the 5-methyltetrahydropteroyltri-L-glutamate site; that span reads RELK. L-homocysteine contacts are provided by residues 433 to 435 and Glu486; that span reads IGS. L-methionine contacts are provided by residues 433 to 435 and Glu486; that span reads IGS. Residues 517–518 and Trp563 each bind 5-methyltetrahydropteroyltri-L-glutamate; that span reads RC. L-homocysteine is bound at residue Asp601. Asp601 provides a ligand contact to L-methionine. Residue Glu607 coordinates 5-methyltetrahydropteroyltri-L-glutamate. Positions 643, 645, and 667 each coordinate Zn(2+). His696 (proton donor) is an active-site residue. Cys728 provides a ligand contact to Zn(2+).

Belongs to the vitamin-B12 independent methionine synthase family. The cofactor is Zn(2+).

The enzyme catalyses 5-methyltetrahydropteroyltri-L-glutamate + L-homocysteine = tetrahydropteroyltri-L-glutamate + L-methionine. The protein operates within amino-acid biosynthesis; L-methionine biosynthesis via de novo pathway; L-methionine from L-homocysteine (MetE route): step 1/1. Its function is as follows. Catalyzes the transfer of a methyl group from 5-methyltetrahydrofolate to homocysteine resulting in methionine formation. This is 5-methyltetrahydropteroyltriglutamate--homocysteine methyltransferase from Neisseria gonorrhoeae (strain ATCC 700825 / FA 1090).